The sequence spans 98 residues: NADH-ubiquinone oxidoreductase chain 4L (98 aa).

Helical transmembrane passes span 1 to 21 (MSMVYANIFLAFIMSLMGLLM), 29 to 49 (SLLCLEGMMLSLFVMMTVTIL), and 61 to 81 (IILLVFAACEAALGLLLLVMV).

It belongs to the complex I subunit 4L family. In terms of assembly, core subunit of respiratory chain NADH dehydrogenase (Complex I) which is composed of 45 different subunits.

Its subcellular location is the mitochondrion inner membrane. It catalyses the reaction a ubiquinone + NADH + 5 H(+)(in) = a ubiquinol + NAD(+) + 4 H(+)(out). Functionally, core subunit of the mitochondrial membrane respiratory chain NADH dehydrogenase (Complex I) which catalyzes electron transfer from NADH through the respiratory chain, using ubiquinone as an electron acceptor. Part of the enzyme membrane arm which is embedded in the lipid bilayer and involved in proton translocation. The sequence is that of NADH-ubiquinone oxidoreductase chain 4L (MT-ND4L) from Pusa hispida (Ringed seal).